We begin with the raw amino-acid sequence, 90 residues long: Putative sodium channel toxin Ts35 (90 aa).

The signal sequence occupies residues 1 to 22 (QDEVGLGSCSVIFVVGNEEGEA). Residues 23–87 (KDGYAVGGDR…WGNPTLGPCL (65 aa)) enclose the LCN-type CS-alpha/beta domain. 4 cysteine pairs are disulfide-bonded: Cys33/Cys86, Cys37/Cys61, Cys46/Cys66, and Cys50/Cys68.

It belongs to the long (4 C-C) scorpion toxin superfamily. Sodium channel inhibitor family. Expressed by the venom gland.

It is found in the secreted. Functionally, putative sodium channel toxin. The sequence is that of Putative sodium channel toxin Ts35 from Tityus serrulatus (Brazilian scorpion).